The sequence spans 182 residues: Ribosome-recycling factor (182 aa).

This sequence belongs to the RRF family.

The protein localises to the cytoplasm. In terms of biological role, responsible for the release of ribosomes from messenger RNA at the termination of protein biosynthesis. May increase the efficiency of translation by recycling ribosomes from one round of translation to another. The polypeptide is Ribosome-recycling factor (Prochlorococcus marinus (strain MIT 9313)).